We begin with the raw amino-acid sequence, 339 residues long: Anthranilate phosphoribosyltransferase (339 aa).

5-phospho-alpha-D-ribose 1-diphosphate contacts are provided by residues glycine 81, 84–85 (GD), threonine 89, 91–94 (NIST), 109–117 (KHGNRNLSS), and threonine 121. Position 81 (glycine 81) interacts with anthranilate. A Mg(2+)-binding site is contributed by serine 93. Asparagine 112 provides a ligand contact to anthranilate. Residue arginine 167 coordinates anthranilate. Aspartate 226 and glutamate 227 together coordinate Mg(2+).

Belongs to the anthranilate phosphoribosyltransferase family. In terms of assembly, homodimer. Mg(2+) serves as cofactor.

It catalyses the reaction N-(5-phospho-beta-D-ribosyl)anthranilate + diphosphate = 5-phospho-alpha-D-ribose 1-diphosphate + anthranilate. It participates in amino-acid biosynthesis; L-tryptophan biosynthesis; L-tryptophan from chorismate: step 2/5. Its function is as follows. Catalyzes the transfer of the phosphoribosyl group of 5-phosphorylribose-1-pyrophosphate (PRPP) to anthranilate to yield N-(5'-phosphoribosyl)-anthranilate (PRA). This Ruegeria pomeroyi (strain ATCC 700808 / DSM 15171 / DSS-3) (Silicibacter pomeroyi) protein is Anthranilate phosphoribosyltransferase.